The following is a 498-amino-acid chain: Ribulose bisphosphate carboxylase large chain (498 aa).

The propeptide occupies 1 to 2; the sequence is MS. The residue at position 3 (P3) is an N-acetylproline. K14 is modified (N6,N6,N6-trimethyllysine). 2 residues coordinate substrate: N123 and T173. K175 serves as the catalytic Proton acceptor. K177 is a substrate binding site. The Mg(2+) site is built by K201, D203, and E204. K201 carries the post-translational modification N6-carboxylysine. Residue H294 is the Proton acceptor of the active site. Substrate contacts are provided by R295, H327, and S379. The tract at residues 473 to 498 is disordered; sequence DTLDPNDKKQRDNEDTLADKFFGDKG.

Belongs to the RuBisCO large chain family. Type I subfamily. Heterohexadecamer of 8 large chains and 8 small chains; disulfide-linked. The disulfide link is formed within the large subunit homodimers. The cofactor is Mg(2+). In terms of processing, the disulfide bond which can form in the large chain dimeric partners within the hexadecamer appears to be associated with oxidative stress and protein turnover.

The protein resides in the plastid. The catalysed reaction is 2 (2R)-3-phosphoglycerate + 2 H(+) = D-ribulose 1,5-bisphosphate + CO2 + H2O. It carries out the reaction D-ribulose 1,5-bisphosphate + O2 = 2-phosphoglycolate + (2R)-3-phosphoglycerate + 2 H(+). Functionally, ruBisCO catalyzes two reactions: the carboxylation of D-ribulose 1,5-bisphosphate, the primary event in carbon dioxide fixation, as well as the oxidative fragmentation of the pentose substrate in the photorespiration process. Both reactions occur simultaneously and in competition at the same active site. In Cuscuta exaltata (Tall dodder), this protein is Ribulose bisphosphate carboxylase large chain.